We begin with the raw amino-acid sequence, 41 residues long: Large ribosomal subunit protein bL36 (41 aa).

This sequence belongs to the bacterial ribosomal protein bL36 family.

This Rickettsia massiliae (strain Mtu5) protein is Large ribosomal subunit protein bL36.